We begin with the raw amino-acid sequence, 273 residues long: Tryptophan synthase alpha chain (273 aa).

Residues E56 and D67 each act as proton acceptor in the active site.

The protein belongs to the TrpA family. Tetramer of two alpha and two beta chains.

It catalyses the reaction (1S,2R)-1-C-(indol-3-yl)glycerol 3-phosphate + L-serine = D-glyceraldehyde 3-phosphate + L-tryptophan + H2O. Its pathway is amino-acid biosynthesis; L-tryptophan biosynthesis; L-tryptophan from chorismate: step 5/5. Functionally, the alpha subunit is responsible for the aldol cleavage of indoleglycerol phosphate to indole and glyceraldehyde 3-phosphate. The sequence is that of Tryptophan synthase alpha chain from Shewanella baltica (strain OS185).